The following is a 357-amino-acid chain: Mitochondrial carrier protein LEU5 (357 aa).

A run of 6 helical transmembrane segments spans residues 31 to 47, 103 to 119, 136 to 153, 208 to 228, 269 to 285, and 325 to 347; these read DYIV…GSCA, LRIF…YEQI, LVSG…TYPL, VPTV…HDLL, ISGG…AYPF, and GFFV…SFFV. Solcar repeat units follow at residues 31 to 122, 130 to 231, and 262 to 354; these read DYIV…IRNT, ESHW…LHDV, and LRTW…MKWN.

Belongs to the mitochondrial carrier (TC 2.A.29) family.

The protein localises to the mitochondrion inner membrane. Required for the accumulation of coenzyme A in the mitochondrial matrix. In Saccharomyces cerevisiae (strain ATCC 204508 / S288c) (Baker's yeast), this protein is Mitochondrial carrier protein LEU5 (LEU5).